Reading from the N-terminus, the 168-residue chain is Photosystem I assembly protein Ycf3 (168 aa).

TPR repeat units follow at residues 35 to 68, 72 to 105, and 120 to 153; these read AFAYYRDGMSAQSEGNYAEALQNYYEAMRLEIDP, SYILYNIGLIHTRNGEHTKALEYYFRALERNPFL, and GEQAIRQGDSEIAEAWFDQAAEYWKQALALTPGN.

It belongs to the Ycf3 family.

The protein resides in the plastid. It is found in the chloroplast thylakoid membrane. In terms of biological role, essential for the assembly of the photosystem I (PSI) complex. May act as a chaperone-like factor to guide the assembly of the PSI subunits. The sequence is that of Photosystem I assembly protein Ycf3 from Morus indica (Mulberry).